The sequence spans 545 residues: CTP synthase (545 aa).

Residues 1-266 (MTHFIFVTGG…DDLICERFGF (266 aa)) are amidoligase domain. Ser-13 lines the CTP pocket. Position 13 (Ser-13) interacts with UTP. Residues 14-19 (SLGKGI) and Asp-71 each bind ATP. Mg(2+)-binding residues include Asp-71 and Glu-140. CTP contacts are provided by residues 147-149 (DIE), 187-192 (KTKPTQ), and Lys-223. UTP is bound by residues 187–192 (KTKPTQ) and Lys-223. Position 239–241 (239–241 (KDA)) interacts with ATP. In terms of domain architecture, Glutamine amidotransferase type-1 spans 292–543 (RVAMVGKYVE…IDAAKTQHQK (252 aa)). Gly-353 is an L-glutamine binding site. The Nucleophile; for glutamine hydrolysis role is filled by Cys-380. Residues 381-384 (LGMQ), Glu-404, and Arg-471 contribute to the L-glutamine site. Active-site residues include His-516 and Glu-518.

It belongs to the CTP synthase family. As to quaternary structure, homotetramer.

The catalysed reaction is UTP + L-glutamine + ATP + H2O = CTP + L-glutamate + ADP + phosphate + 2 H(+). It catalyses the reaction L-glutamine + H2O = L-glutamate + NH4(+). The enzyme catalyses UTP + NH4(+) + ATP = CTP + ADP + phosphate + 2 H(+). It participates in pyrimidine metabolism; CTP biosynthesis via de novo pathway; CTP from UDP: step 2/2. Its activity is regulated as follows. Allosterically activated by GTP, when glutamine is the substrate; GTP has no effect on the reaction when ammonia is the substrate. The allosteric effector GTP functions by stabilizing the protein conformation that binds the tetrahedral intermediate(s) formed during glutamine hydrolysis. Inhibited by the product CTP, via allosteric rather than competitive inhibition. In terms of biological role, catalyzes the ATP-dependent amination of UTP to CTP with either L-glutamine or ammonia as the source of nitrogen. Regulates intracellular CTP levels through interactions with the four ribonucleotide triphosphates. This is CTP synthase from Acinetobacter baumannii (strain AB307-0294).